Here is a 397-residue protein sequence, read N- to C-terminus: Arginine biosynthesis bifunctional protein ArgJ (397 aa).

Residues Thr143, Lys169, Thr180, Glu266, Asn392, and Thr397 each coordinate substrate. The active-site Nucleophile is Thr180.

Belongs to the ArgJ family. Heterotetramer of two alpha and two beta chains.

The protein resides in the cytoplasm. It carries out the reaction N(2)-acetyl-L-ornithine + L-glutamate = N-acetyl-L-glutamate + L-ornithine. The enzyme catalyses L-glutamate + acetyl-CoA = N-acetyl-L-glutamate + CoA + H(+). The protein operates within amino-acid biosynthesis; L-arginine biosynthesis; L-ornithine and N-acetyl-L-glutamate from L-glutamate and N(2)-acetyl-L-ornithine (cyclic): step 1/1. Its pathway is amino-acid biosynthesis; L-arginine biosynthesis; N(2)-acetyl-L-ornithine from L-glutamate: step 1/4. Competitively inhibited by L-ornithine. Its function is as follows. Catalyzes two activities which are involved in the cyclic version of arginine biosynthesis: the synthesis of N-acetylglutamate from glutamate and acetyl-CoA as the acetyl donor, and of ornithine by transacetylation between N(2)-acetylornithine and glutamate. In Thermotoga neapolitana (strain ATCC 49049 / DSM 4359 / NBRC 107923 / NS-E), this protein is Arginine biosynthesis bifunctional protein ArgJ.